A 282-amino-acid polypeptide reads, in one-letter code: Lipoyl synthase (282 aa).

[4Fe-4S] cluster-binding residues include cysteine 37, cysteine 42, cysteine 48, cysteine 63, cysteine 67, cysteine 70, and serine 275. Residues 49-264 (WSRGTATFMI…RLVGIEKGFR (216 aa)) enclose the Radical SAM core domain.

It belongs to the radical SAM superfamily. Lipoyl synthase family. [4Fe-4S] cluster is required as a cofactor.

The protein localises to the cytoplasm. The enzyme catalyses [[Fe-S] cluster scaffold protein carrying a second [4Fe-4S](2+) cluster] + N(6)-octanoyl-L-lysyl-[protein] + 2 oxidized [2Fe-2S]-[ferredoxin] + 2 S-adenosyl-L-methionine + 4 H(+) = [[Fe-S] cluster scaffold protein] + N(6)-[(R)-dihydrolipoyl]-L-lysyl-[protein] + 4 Fe(3+) + 2 hydrogen sulfide + 2 5'-deoxyadenosine + 2 L-methionine + 2 reduced [2Fe-2S]-[ferredoxin]. It participates in protein modification; protein lipoylation via endogenous pathway; protein N(6)-(lipoyl)lysine from octanoyl-[acyl-carrier-protein]: step 2/2. Functionally, catalyzes the radical-mediated insertion of two sulfur atoms into the C-6 and C-8 positions of the octanoyl moiety bound to the lipoyl domains of lipoate-dependent enzymes, thereby converting the octanoylated domains into lipoylated derivatives. The sequence is that of Lipoyl synthase from Porphyromonas gingivalis (strain ATCC BAA-308 / W83).